A 104-amino-acid chain; its full sequence is Evasin P1174 (104 aa).

An N-terminal signal peptide occupies residues 1–27 (LKTFCLFLQIAVFIALGIQIFLCGTDA). 3 cysteine pairs are disulfide-bonded: C40-C59, C44-C61, and C55-C72. N43, N49, and N58 each carry an N-linked (GlcNAc...) asparagine glycan. The segment at 85-104 (KPTSEEIADASPRPKETNSH) is disordered.

The protein localises to the secreted. Salivary chemokine-binding protein which binds to host chemokines CXCL1 and CXCL8. The protein is Evasin P1174 of Ixodes ricinus (Common tick).